We begin with the raw amino-acid sequence, 412 residues long: Probable beta-1,4-xylosyltransferase IRX10 (412 aa).

The chain crosses the membrane as a helical; Signal-anchor for type II membrane protein span at residues 1–21 (MKIHSCLSAILLFLFFSASSA). Over 22-412 (KQNVRTERIS…AGPVADLKPW (391 aa)) the chain is Lumenal. N-linked (GlcNAc...) asparagine glycans are attached at residues asparagine 139 and asparagine 400.

Belongs to the glycosyltransferase 47 family. As to expression, limited to xylem cells. Expressed in the root tip, xylem cells of roots, and in the vasculature of roots, cotyledons and leaves.

It localises to the golgi apparatus membrane. Its function is as follows. Involved in the synthesis of the hemicellulose glucuronoxylan, a major component of secondary cell walls. Probably involved in the elongation of glucuronoxylan xylosyl backbone, especially in the formation of GlcUA side chain of xylans. This chain is Probable beta-1,4-xylosyltransferase IRX10 (IRX10), found in Arabidopsis thaliana (Mouse-ear cress).